Consider the following 176-residue polypeptide: Probable DNA-directed RNA polymerase subunit delta (176 aa).

The HTH HARE-type domain maps to 14 to 81 (CSMIEVVHSV…GENRWGLRSW (68 aa)). The tract at residues 91–176 (ILPQPKPKKK…ETEEEEEEEL (86 aa)) is disordered. A compositionally biased stretch (acidic residues) spans 106–176 (DGFDDYIEED…ETEEEEEEEL (71 aa)).

This sequence belongs to the RpoE family. In terms of assembly, RNAP is composed of a core of 2 alpha, a beta and a beta' subunits. The core is associated with a delta subunit and one of several sigma factors.

Functionally, participates in both the initiation and recycling phases of transcription. In the presence of the delta subunit, RNAP displays an increased specificity of transcription, a decreased affinity for nucleic acids, and an increased efficiency of RNA synthesis because of enhanced recycling. The polypeptide is Probable DNA-directed RNA polymerase subunit delta (Bacillus thuringiensis (strain Al Hakam)).